Here is a 178-residue protein sequence, read N- to C-terminus: Large ribosomal subunit protein uL6 (178 aa).

This sequence belongs to the universal ribosomal protein uL6 family. In terms of assembly, part of the 50S ribosomal subunit.

In terms of biological role, this protein binds to the 23S rRNA, and is important in its secondary structure. It is located near the subunit interface in the base of the L7/L12 stalk, and near the tRNA binding site of the peptidyltransferase center. The chain is Large ribosomal subunit protein uL6 from Clavibacter sepedonicus (Clavibacter michiganensis subsp. sepedonicus).